The sequence spans 228 residues: Hematopoietically-expressed homeobox protein hhex (228 aa).

Positions 117–176 (RKGGQVRFSNDQTIELEKKFETQKYLSPPERKRLAKMLQLSERQVKTWFQNRRAKWRRLK) form a DNA-binding region, homeobox. The disordered stretch occupies residues 175-228 (LKQENPPSTGKREAEDSDTRRLSDAAARARELESGASTDSEELLDIEDEHQFTL). Residues 184–207 (GKREAEDSDTRRLSDAAARARELE) show a composition bias toward basic and acidic residues. Acidic residues predominate over residues 213–222 (DSEELLDIED).

Expressed in embryonic endothelial and blood lineages. From late-blastula stage, expression is restricted to the dorsal marginal region of the extraembryonic yolk syncytial layer (YSL). By the onset of gastrulation, expressed in the entire dorsal half of the YSL. Post-gastrulation, expression appears in both anterior and posterior lateral plate mesoderm by the 3-somite stage. Posteriorly, expression is in the intermediate cell mass (ICM), which contains both endothelial and blood precursors. Subsequently expressed in the developing endothelial cells including the endocardium until the onset of circulation (24 hpf) and disappears completely by 30 hpf, at which point expression is seen in the thyroid and liver primordia. Also expressed in the developing biliary tree and pancreas.

It localises to the nucleus. Functionally, recognizes the DNA sequence 5'-ATTAA-3'. Transcriptional repressor. Regulates the differentiation of both endothelial and blood cells. Plays a role in embryonic dorsoventral patterning by regulating bmp expression. May establish anterior identity. Functions in the embryo to regulate liver development. Functions extraembryonically to generate organ chirality. The protein is Hematopoietically-expressed homeobox protein hhex of Danio rerio (Zebrafish).